The primary structure comprises 250 residues: ATP synthase subunit a (250 aa).

Helical transmembrane passes span 29–49, 84–104, 114–134, 143–163, 189–209, and 216–236; these read ASLF…FATS, FFPM…LGMM, IVVT…YGFY, LFVP…IEVI, VFAG…GGAL, and VALT…FAVL.

This sequence belongs to the ATPase A chain family. As to quaternary structure, F-type ATPases have 2 components, CF(1) - the catalytic core - and CF(0) - the membrane proton channel. CF(1) has five subunits: alpha(3), beta(3), gamma(1), delta(1), epsilon(1). CF(0) has three main subunits: a(1), b(2) and c(9-12). The alpha and beta chains form an alternating ring which encloses part of the gamma chain. CF(1) is attached to CF(0) by a central stalk formed by the gamma and epsilon chains, while a peripheral stalk is formed by the delta and b chains.

It localises to the cell inner membrane. Its function is as follows. Key component of the proton channel; it plays a direct role in the translocation of protons across the membrane. In Allorhizobium ampelinum (strain ATCC BAA-846 / DSM 112012 / S4) (Agrobacterium vitis (strain S4)), this protein is ATP synthase subunit a.